Here is a 416-residue protein sequence, read N- to C-terminus: 4-hydroxy-3-methylbut-2-en-1-yl diphosphate synthase (flavodoxin) (416 aa).

Residues Cys-304, Cys-307, Cys-350, and Glu-357 each contribute to the [4Fe-4S] cluster site.

Belongs to the IspG family. [4Fe-4S] cluster serves as cofactor.

The enzyme catalyses (2E)-4-hydroxy-3-methylbut-2-enyl diphosphate + oxidized [flavodoxin] + H2O + 2 H(+) = 2-C-methyl-D-erythritol 2,4-cyclic diphosphate + reduced [flavodoxin]. It participates in isoprenoid biosynthesis; isopentenyl diphosphate biosynthesis via DXP pathway; isopentenyl diphosphate from 1-deoxy-D-xylulose 5-phosphate: step 5/6. Its function is as follows. Converts 2C-methyl-D-erythritol 2,4-cyclodiphosphate (ME-2,4cPP) into 1-hydroxy-2-methyl-2-(E)-butenyl 4-diphosphate. The polypeptide is 4-hydroxy-3-methylbut-2-en-1-yl diphosphate synthase (flavodoxin) (Rhizobium etli (strain ATCC 51251 / DSM 11541 / JCM 21823 / NBRC 15573 / CFN 42)).